Reading from the N-terminus, the 99-residue chain is Acylphosphatase (99 aa).

Residues 5–97 (VRQIVIRGRV…RPGERFSQLP (93 aa)) enclose the Acylphosphatase-like domain. Active-site residues include arginine 20 and asparagine 38.

This sequence belongs to the acylphosphatase family.

It carries out the reaction an acyl phosphate + H2O = a carboxylate + phosphate + H(+). The chain is Acylphosphatase (acyP) from Nitrobacter hamburgensis (strain DSM 10229 / NCIMB 13809 / X14).